The chain runs to 249 residues: Probable septum site-determining protein MinC (249 aa).

Positions 116–149 are disordered; that stretch reads AAVSPPPPPPPPPARAEPAAPVARPAPGRMQRNA. Over residues 119–130 the composition is skewed to pro residues; sequence SPPPPPPPPPAR. Residues 131-142 show a composition bias toward low complexity; the sequence is AEPAAPVARPAP.

It belongs to the MinC family. In terms of assembly, interacts with MinD and FtsZ.

Its function is as follows. Cell division inhibitor that blocks the formation of polar Z ring septums. Rapidly oscillates between the poles of the cell to destabilize FtsZ filaments that have formed before they mature into polar Z rings. Prevents FtsZ polymerization. The polypeptide is Probable septum site-determining protein MinC (Xanthomonas campestris pv. campestris (strain ATCC 33913 / DSM 3586 / NCPPB 528 / LMG 568 / P 25)).